We begin with the raw amino-acid sequence, 118 residues long: Large ribosomal subunit protein bL20 (118 aa).

This sequence belongs to the bacterial ribosomal protein bL20 family.

Functionally, binds directly to 23S ribosomal RNA and is necessary for the in vitro assembly process of the 50S ribosomal subunit. It is not involved in the protein synthesizing functions of that subunit. This is Large ribosomal subunit protein bL20 from Azotobacter vinelandii.